The sequence spans 177 residues: Large ribosomal subunit protein uL6 (177 aa).

Belongs to the universal ribosomal protein uL6 family. As to quaternary structure, part of the 50S ribosomal subunit.

In terms of biological role, this protein binds to the 23S rRNA, and is important in its secondary structure. It is located near the subunit interface in the base of the L7/L12 stalk, and near the tRNA binding site of the peptidyltransferase center. The protein is Large ribosomal subunit protein uL6 of Saccharophagus degradans (strain 2-40 / ATCC 43961 / DSM 17024).